The primary structure comprises 618 residues: Methylmalonyl-CoA mutase small subunit (618 aa).

This sequence belongs to the methylmalonyl-CoA mutase family. As to quaternary structure, heterodimer of an alpha and a beta chain. The cofactor is adenosylcob(III)alamin.

It carries out the reaction (R)-methylmalonyl-CoA = succinyl-CoA. The protein operates within metabolic intermediate metabolism; propanoyl-CoA degradation; succinyl-CoA from propanoyl-CoA: step 3/3. Catalyzes the isomerization of succinyl-CoA to methylmalonyl-CoA during synthesis of propionate from tricarboxylic acid-cycle intermediates. The sequence is that of Methylmalonyl-CoA mutase small subunit (mutA) from Porphyromonas gingivalis (strain ATCC BAA-308 / W83).